The following is a 484-amino-acid chain: 6-phosphogluconate dehydrogenase, decarboxylating (484 aa).

Residues 10–15 (GLAVMG), 33–35 (NRT), 75–77 (IKA), and N103 contribute to the NADP(+) site. Substrate is bound by residues N103 and 129-131 (SGG). K183 acts as the Proton acceptor in catalysis. 186-187 (HN) provides a ligand contact to substrate. E190 (proton donor) is an active-site residue. Substrate is bound by residues Y191, K260, R287, R448, and H454.

This sequence belongs to the 6-phosphogluconate dehydrogenase family. As to quaternary structure, homodimer.

The enzyme catalyses 6-phospho-D-gluconate + NADP(+) = D-ribulose 5-phosphate + CO2 + NADPH. It participates in carbohydrate degradation; pentose phosphate pathway; D-ribulose 5-phosphate from D-glucose 6-phosphate (oxidative stage): step 3/3. Its function is as follows. Catalyzes the oxidative decarboxylation of 6-phosphogluconate to ribulose 5-phosphate and CO(2), with concomitant reduction of NADP to NADPH. The sequence is that of 6-phosphogluconate dehydrogenase, decarboxylating from Caenorhabditis elegans.